Here is a 619-residue protein sequence, read N- to C-terminus: Probable galacturonosyltransferase 7 (619 aa).

Residues 1–19 (MKGGGGGGGGGGGGKRRWK) lie on the Cytoplasmic side of the membrane. A helical; Signal-anchor for type II membrane protein transmembrane segment spans residues 20-40 (VLVIGVLVLVILSMLVPLAFL). The Lumenal segment spans residues 41 to 619 (LGLHNGFHSP…RFLSDCNVNP (579 aa)). Residues N68, N106, N132, N343, and N421 are each glycosylated (N-linked (GlcNAc...) asparagine). Positions 95–139 (KSDINVGSRDVNATSGTDSKKRGLPVSPTVVANPSPANKTKSEAS) are disordered. Over residues 124 to 139 (VVANPSPANKTKSEAS) the composition is skewed to polar residues.

The protein belongs to the glycosyltransferase 8 family. In terms of tissue distribution, expressed in roots, inflorescences, flowers, siliques, leaves and stems.

Its subcellular location is the golgi apparatus membrane. It functions in the pathway glycan metabolism; pectin biosynthesis. Its function is as follows. May be involved in pectin biosynthesis. The chain is Probable galacturonosyltransferase 7 (GAUT7) from Arabidopsis thaliana (Mouse-ear cress).